The sequence spans 103 residues: Matrix Gla protein (103 aa).

The signal sequence occupies residues 1-19 (MKSLLPLAILAALAVAALC). Glu-21 is subject to 4-carboxyglutamate. Residues Ser-22, Ser-25, and Ser-28 each carry the phosphoserine modification. A Gla domain is found at 51–97 (HAKAQERVRELNKPAQEINREACDDYKLCERYALIYGYNAAYNRYFR). 4-carboxyglutamate is present on residues Glu-56, Glu-60, Glu-67, and Glu-71. A disulfide bridge connects residues Cys-73 and Cys-79.

Belongs to the osteocalcin/matrix Gla protein family. Requires vitamin K-dependent gamma-carboxylation for its function.

The protein resides in the secreted. Its function is as follows. Associates with the organic matrix of bone and cartilage. Thought to act as an inhibitor of bone formation. The chain is Matrix Gla protein (Mgp) from Rattus norvegicus (Rat).